We begin with the raw amino-acid sequence, 83 residues long: Exodeoxyribonuclease 7 small subunit (83 aa).

This sequence belongs to the XseB family. Heterooligomer composed of large and small subunits.

The protein localises to the cytoplasm. The catalysed reaction is Exonucleolytic cleavage in either 5'- to 3'- or 3'- to 5'-direction to yield nucleoside 5'-phosphates.. Bidirectionally degrades single-stranded DNA into large acid-insoluble oligonucleotides, which are then degraded further into small acid-soluble oligonucleotides. The chain is Exodeoxyribonuclease 7 small subunit from Sinorhizobium medicae (strain WSM419) (Ensifer medicae).